We begin with the raw amino-acid sequence, 664 residues long: Probable urea active transporter 1 (664 aa).

16 helical membrane passes run 9 to 29 (SVGYGIVVGLGLGFAALMIFV), 56 to 76 (GLVASAVVSSWTWASTLLTSA), 86 to 106 (GAFWYASGACVQILLFTVLAI), 132 to 152 (GVFLVFAYITNILVMAMLLCG), 165 to 185 (TVAVCFLLPVGVIIYTMFGGI), 189 to 209 (FLTDYIHTVIILVILIMFSLA), 252 to 272 (GAIFFIINLAGNFGTVFVDNG), 290 to 310 (ILGGLAWFAIPWLAATTMGLV), 327 to 347 (MSDLEVSEGLVLPYAAIALMG), 353 to 373 (ATLLLVFMAVTSAASAELIAV), 395 to 415 (LLYTGHASLIVFGFAMSGFAT), 428 to 448 (YLLMGVLVCPAVVPATCVMLF), 454 to 474 (IAVTVSPVLGIISSIITWLVV), 496 to 516 (AGNVVGLLSPALYILILSIIF), 555 to 575 (VAALIITAAFIILWPWPMYGT), and 587 to 607 (WVVVGLIWIFFTVFAVGIFPL).

This sequence belongs to the sodium:solute symporter (SSF) (TC 2.A.21) family.

It localises to the membrane. In terms of biological role, involved in active transport of urea. The sequence is that of Probable urea active transporter 1 (dur3-1) from Schizosaccharomyces pombe (strain 972 / ATCC 24843) (Fission yeast).